Here is a 505-residue protein sequence, read N- to C-terminus: Beta-glucosidase 3 (505 aa).

Residues 1-22 (MAAAAAFFCALLFISVQHGVLG) form the signal peptide. Residues Gln-43 and His-143 each coordinate a beta-D-glucoside. The active-site Proton donor is Glu-189. A disulfide bond links Cys-208 and Cys-217. Asn-221 is a glycosylation site (N-linked (GlcNAc...) asparagine). Residues Tyr-333 and Glu-405 each coordinate a beta-D-glucoside. The active-site Nucleophile is Glu-405. N-linked (GlcNAc...) asparagine glycans are attached at residues Asn-415 and Asn-436. A beta-D-glucoside-binding residues include Trp-450 and Tyr-466.

This sequence belongs to the glycosyl hydrolase 1 family.

It carries out the reaction Hydrolysis of terminal, non-reducing beta-D-glucosyl residues with release of beta-D-glucose.. In Oryza sativa subsp. japonica (Rice), this protein is Beta-glucosidase 3 (BGLU3).